The following is a 126-amino-acid chain: Fluoride-specific ion channel FluC 1 (126 aa).

The next 4 membrane-spanning stretches (helical) occupy residues 5-25 (FILAVAAGGSLGSVARYLVGI), 39-59 (TLFINITGSLLIGLFAGLFAI), 69-89 (IFLIVGICGGYTTFSTFSLDS), and 100-120 (AAGAYMIASVVLSVGALIAGI). Positions 77 and 80 each coordinate Na(+).

This sequence belongs to the fluoride channel Fluc/FEX (TC 1.A.43) family.

Its subcellular location is the cell inner membrane. It catalyses the reaction fluoride(in) = fluoride(out). Na(+) is not transported, but it plays an essential structural role and its presence is essential for fluoride channel function. In terms of biological role, fluoride-specific ion channel. Important for reducing fluoride concentration in the cell, thus reducing its toxicity. The sequence is that of Fluoride-specific ion channel FluC 1 from Nitrobacter hamburgensis (strain DSM 10229 / NCIMB 13809 / X14).